The sequence spans 131 residues: Large ribosomal subunit protein bL17 (131 aa).

It belongs to the bacterial ribosomal protein bL17 family. In terms of assembly, part of the 50S ribosomal subunit. Contacts protein L32.

This is Large ribosomal subunit protein bL17 from Bordetella avium (strain 197N).